We begin with the raw amino-acid sequence, 126 residues long: S-adenosylmethionine decarboxylase proenzyme (126 aa).

Residue Ser-63 is the Schiff-base intermediate with substrate; via pyruvic acid of the active site. A Pyruvic acid (Ser); by autocatalysis modification is found at Ser-63. His-68 acts as the Proton acceptor; for processing activity in catalysis. Cys-83 (proton donor; for catalytic activity) is an active-site residue.

It belongs to the prokaryotic AdoMetDC family. Type 1 subfamily. As to quaternary structure, heterotetramer of two alpha and two beta chains arranged as a dimer of alpha/beta heterodimers. Pyruvate is required as a cofactor. In terms of processing, is synthesized initially as an inactive proenzyme. Formation of the active enzyme involves a self-maturation process in which the active site pyruvoyl group is generated from an internal serine residue via an autocatalytic post-translational modification. Two non-identical subunits are generated from the proenzyme in this reaction, and the pyruvate is formed at the N-terminus of the alpha chain, which is derived from the carboxyl end of the proenzyme. The post-translation cleavage follows an unusual pathway, termed non-hydrolytic serinolysis, in which the side chain hydroxyl group of the serine supplies its oxygen atom to form the C-terminus of the beta chain, while the remainder of the serine residue undergoes an oxidative deamination to produce ammonia and the pyruvoyl group blocking the N-terminus of the alpha chain.

The enzyme catalyses S-adenosyl-L-methionine + H(+) = S-adenosyl 3-(methylsulfanyl)propylamine + CO2. Its pathway is amine and polyamine biosynthesis; S-adenosylmethioninamine biosynthesis; S-adenosylmethioninamine from S-adenosyl-L-methionine: step 1/1. Catalyzes the decarboxylation of S-adenosylmethionine to S-adenosylmethioninamine (dcAdoMet), the propylamine donor required for the synthesis of the polyamines spermine and spermidine from the diamine putrescine. This Bacillus velezensis (strain DSM 23117 / BGSC 10A6 / LMG 26770 / FZB42) (Bacillus amyloliquefaciens subsp. plantarum) protein is S-adenosylmethionine decarboxylase proenzyme.